Here is a 916-residue protein sequence, read N- to C-terminus: Protein prickle (916 aa).

Disordered stretches follow at residues P49–S105 and Q127–D176. The segment covering S145–T156 has biased composition (low complexity). The segment covering T157 to H171 has biased composition (gly residues). The PET domain maps to G167–I275. 3 consecutive LIM zinc-binding domains span residues Q274–K338, P339–E399, and Y400–P462. 4 disordered regions span residues E460–R593, V635–S671, D692–P725, and R763–Y870. Polar residues-rich tracts occupy residues S507–S517, E526–L569, and A642–E654. Residues L655–S671 show a composition bias toward low complexity. Over residues R777–R793 the composition is skewed to basic residues. Positions G796–S805 are enriched in low complexity. The span at V829–D844 shows a compositional bias: basic and acidic residues. Low complexity predominate over residues R852 to D867.

It belongs to the prickle / espinas / testin family. In terms of assembly, interacts with dsh; PET and LIM domains interact with dsh DEP domain, in wing cells. Interacts with Vang in photoreceptor cells.

It is found in the cell membrane. Its function is as follows. Acts in a planar cell polarity (PCP) complex; polarization along the apical/basal axis of epithelial cells. PCP signaling in the wing disk requires the receptor fz and the cytoplasmic proteins dsh and pk. These act in a feedback loop leading to activation of the jnk cascade and subsequent polarized arrangement of hairs and bristles. Dgo and pk compete with one another for dsh binding, thereby modulating fz dsh activity and ensuring tight control over fz PCP signaling. Vang, stan and pk function together to regulate the establishment of tissue polarity in the adult eye. This Aedes aegypti (Yellowfever mosquito) protein is Protein prickle.